A 541-amino-acid chain; its full sequence is MNGVVIPQTPIAVDFWSLRRAGSARLFFLTHMHCDHTVGLSSTWARPLYCSPITACLLHRRLQVSKHWIRALEVGESHVLPLDEIGQETMTVTLIDANHCPGSVMFLFEGYFGTILYTGDFRYTPSMLKEPALILGKQIHTLYLDNTNCNPALVLPSRQEATQQIVQLIRQFPQHNIKIGLYSLGKESLLEQLALEFRTWVVLSPQRLELVQLLGLADVFTVEEEAGRIHAVDHTEICHSAMLQWNQSHPTIAIFPTSRKVRSPHPSIYTVPYSDHSSYSELRAFVAALRPCQVVPIVHQKPCGEFFQDSLSPRLAMPLIPHSVQQYMSSSSRKTNVLWQLERRLKRPRTQGVVFESPEEKANQVKVDRDSKKHKKENLSPWAGHLERLCPHPLQARKQLFPDFCRKERDEPVLFCDSNKMATVLTAPLEFSVQLQPIDEFLFPETREKIGLESPLLSRGDSGSPARGNQSDCVGCGSPPAHISRAVPLTPESRGLALKYLLTPVHFLQAGFSSRNFDKQVEKHQRVQRSSPAVLSPVDVG.

A Glycyl lysine isopeptide (Lys-Gly) (interchain with G-Cter in SUMO2) cross-link involves residue Lys334. The tract at residues 455–475 (PLLSRGDSGSPARGNQSDCVG) is disordered. Residues 492-507 (ESRGLALKYLLTPVHF) carry the TBM motif.

This sequence belongs to the DNA repair metallo-beta-lactamase (DRMBL) family. Interacts with MUS81, MRE11 and FANCD2. Interacts with HSPA2, HSPA8 and HSPA14. Interacts with SPAG5. Interacts with TERF2; the interaction is direct. In terms of processing, ubiquitinated, leading to its degradation. Interaction with TERF2 protects it from ubiquitination.

It localises to the chromosome. Its subcellular location is the telomere. The protein resides in the nucleus. It is found in the cytoplasm. The protein localises to the cytoskeleton. It localises to the microtubule organizing center. Its subcellular location is the centrosome. It catalyses the reaction a beta-lactam + H2O = a substituted beta-amino acid. Functionally, 5'-3' exonuclease that plays a central role in telomere maintenance and protection during S-phase. Participates in the protection of telomeres against non-homologous end-joining (NHEJ)-mediated repair, thereby ensuring that telomeres do not fuse. Plays a key role in telomeric loop (T loop) formation by being recruited by TERF2 at the leading end telomeres and by processing leading-end telomeres immediately after their replication via its exonuclease activity: generates 3' single-stranded overhang at the leading end telomeres avoiding blunt leading-end telomeres that are vulnerable to end-joining reactions and expose the telomere end in a manner that activates the DNA repair pathways. Together with TERF2, required to protect telomeres from replicative damage during replication by controlling the amount of DNA topoisomerase (TOP1, TOP2A and TOP2B) needed for telomere replication during fork passage and prevent aberrant telomere topology. Also involved in response to DNA damage: plays a role in response to DNA interstrand cross-links (ICLs) by facilitating double-strand break formation. In case of spindle stress, involved in prophase checkpoint. Possesses beta-lactamase activity, catalyzing the hydrolysis of penicillin G and nitrocefin. Exhibits no activity towards other beta-lactam antibiotic classes including cephalosporins (cefotaxime) and carbapenems (imipenem). This Mus musculus (Mouse) protein is 5' exonuclease Apollo (Dclre1b).